Reading from the N-terminus, the 300-residue chain is Dihydroorotate dehydrogenase B (NAD(+)), catalytic subunit (300 aa).

Residues serine 20 and 44–45 each bind FMN; that span reads KG. Substrate-binding positions include lysine 44 and 68–72; that span reads NSVGL. Residues asparagine 98 and asparagine 124 each contribute to the FMN site. Position 124 (asparagine 124) interacts with substrate. Cysteine 127 functions as the Nucleophile in the catalytic mechanism. Lysine 162 and isoleucine 188 together coordinate FMN. Substrate is bound at residue 189-190; the sequence is NT. FMN-binding positions include glycine 214, 240–241, and 262–263; these read GG and GT.

Belongs to the dihydroorotate dehydrogenase family. Type 1 subfamily. Heterotetramer of 2 PyrK and 2 PyrD type B subunits. FMN serves as cofactor.

It is found in the cytoplasm. The enzyme catalyses (S)-dihydroorotate + NAD(+) = orotate + NADH + H(+). It participates in pyrimidine metabolism; UMP biosynthesis via de novo pathway; orotate from (S)-dihydroorotate (NAD(+) route): step 1/1. Its function is as follows. Catalyzes the conversion of dihydroorotate to orotate with NAD(+) as electron acceptor. In Caldicellulosiruptor bescii (strain ATCC BAA-1888 / DSM 6725 / KCTC 15123 / Z-1320) (Anaerocellum thermophilum), this protein is Dihydroorotate dehydrogenase B (NAD(+)), catalytic subunit (pyrD).